A 581-amino-acid polypeptide reads, in one-letter code: Frizzled-10 (581 aa).

Positions 1 to 20 are cleaved as a signal peptide; that stretch reads MQRPGPRLWLVLQVMGSCAA. Topologically, residues 21–225 are extracellular; the sequence is ISSMDMERPG…DVYWSREDKR (205 aa). The 122-residue stretch at 29–150 folds into the FZ domain; that stretch reads PGDGKCQPIE…NDPNYLCMEA (122 aa). 5 disulfide bridges follow: cysteine 34-cysteine 95, cysteine 42-cysteine 88, cysteine 79-cysteine 117, cysteine 106-cysteine 147, and cysteine 110-cysteine 134. Residue asparagine 48 is glycosylated (N-linked (GlcNAc...) asparagine). Asparagine 153 carries an N-linked (GlcNAc...) asparagine glycan. Residues 226–246 form a helical membrane-spanning segment; it reads FAVVWLAIWAVLCFFSSAFTV. The Cytoplasmic segment spans residues 247-262; the sequence is LTFLIDPARFRYPERP. Residues 263–283 form a helical membrane-spanning segment; that stretch reads IIFLSMCYCVYSVGYLIRLFA. Residues 284 to 311 are Extracellular-facing; it reads GAESIACDRDSGQLYVIQEGLESTGCTL. A helical membrane pass occupies residues 312–332; sequence VFLVLYYFGMASSLWWVVLTL. Over 333 to 351 the chain is Cytoplasmic; it reads TWFLAAGKKWGHEAIEANS. The helical transmembrane segment at 352-372 threads the bilayer; sequence SYFHLAAWAIPAVKTILILVM. The Extracellular portion of the chain corresponds to 373–393; the sequence is RRVAGDELTGVCYVGSMDVNA. A helical membrane pass occupies residues 394–414; the sequence is LTGFVLIPLACYLVIGTSFIL. Residues 415 to 443 lie on the Cytoplasmic side of the membrane; the sequence is SGFVALFHIRRVMKTGGENTDKLEKLMVR. Residues 444-464 form a helical membrane-spanning segment; sequence IGLFSVLYTVPATCVIACYFY. Residues 465–502 are Extracellular-facing; sequence ERLNMDYWKILAAQHKCKMNNQTKTLDCLMAASIPAVE. Asparagine 485 is a glycosylation site (N-linked (GlcNAc...) asparagine). A helical membrane pass occupies residues 503–523; the sequence is IFMVKIFMLLVVGITSGMWIW. Topologically, residues 524 to 581 are cytoplasmic; the sequence is TSKTLQSWQQVCSRRLKKKSRRKPASVITSGGIYKKAQHPQKTHHGKYEIPAQSPTCV. The Lys-Thr-X-X-X-Trp motif, mediates interaction with the PDZ domain of Dvl family members motif lies at 526–531; sequence KTLQSW. The tract at residues 560 to 581 is disordered; the sequence is AQHPQKTHHGKYEIPAQSPTCV. The PDZ-binding signature appears at 579 to 581; it reads TCV.

It belongs to the G-protein coupled receptor Fz/Smo family. Interacts with WNT7B. Interacts with MYOC. Ubiquitinated by ZNRF3, leading to its degradation by the proteasome. Highest levels in the placenta and fetal kidney, followed by fetal lung and brain. In adult brain, abundantly expressed in the cerebellum, followed by cerebral cortex, medulla and spinal cord; very low levels in total brain, frontal lobe, temporal lobe and putamen. Weak expression detected in adult brain, heart, lung, skeletal muscle, pancreas, spleen and prostate.

Its subcellular location is the cell membrane. Receptor for Wnt proteins. Functions in the canonical Wnt/beta-catenin signaling pathway. The canonical Wnt/beta-catenin signaling pathway leads to the activation of disheveled proteins, inhibition of GSK-3 kinase, nuclear accumulation of beta-catenin and activation of Wnt target genes. A second signaling pathway involving PKC and calcium fluxes has been seen for some family members, but it is not yet clear if it represents a distinct pathway or if it can be integrated in the canonical pathway, as PKC seems to be required for Wnt-mediated inactivation of GSK-3 kinase. Both pathways seem to involve interactions with G-proteins. May be involved in transduction and intercellular transmission of polarity information during tissue morphogenesis and/or in differentiated tissues. The chain is Frizzled-10 (FZD10) from Homo sapiens (Human).